Reading from the N-terminus, the 395-residue chain is Oxalate oxidoreductase subunit alpha (395 aa).

In terms of assembly, dimer of heterotrimer of one alpha, one beta and one delta subunit.

The enzyme catalyses oxidized 2[4Fe-4S]-[ferredoxin] + oxalate = reduced 2[4Fe-4S]-[ferredoxin] + 2 CO2. Its function is as follows. Catalyzes the anaerobic oxidation of oxalate using a broad range of electron acceptors, including ferredoxin and the nickel-dependent carbon monoxide dehydrogenase. Does not require coenzyme A as cosubstrate. Enables anaerobic growth on oxalate which is used as energy source by the bacteria. The protein is Oxalate oxidoreductase subunit alpha of Moorella thermoacetica (strain ATCC 39073 / JCM 9320).